A 209-amino-acid chain; its full sequence is NAD(P)H-quinone oxidoreductase subunit I (209 aa).

4Fe-4S ferredoxin-type domains follow at residues 55–84 (GRIH…VDWE) and 95–124 (KHYS…MTEE). [4Fe-4S] cluster-binding residues include C64, C67, C70, C74, C104, C107, C110, and C114.

This sequence belongs to the complex I 23 kDa subunit family. In terms of assembly, NDH-1 is composed of at least 11 different subunits. Requires [4Fe-4S] cluster as cofactor.

It is found in the cellular thylakoid membrane. It carries out the reaction a plastoquinone + NADH + (n+1) H(+)(in) = a plastoquinol + NAD(+) + n H(+)(out). It catalyses the reaction a plastoquinone + NADPH + (n+1) H(+)(in) = a plastoquinol + NADP(+) + n H(+)(out). Its function is as follows. NDH-1 shuttles electrons from an unknown electron donor, via FMN and iron-sulfur (Fe-S) centers, to quinones in the respiratory and/or the photosynthetic chain. The immediate electron acceptor for the enzyme in this species is believed to be plastoquinone. Couples the redox reaction to proton translocation, and thus conserves the redox energy in a proton gradient. This chain is NAD(P)H-quinone oxidoreductase subunit I, found in Trichodesmium erythraeum (strain IMS101).